We begin with the raw amino-acid sequence, 721 residues long: Ribonucleoside-diphosphate reductase subunit alpha (721 aa).

Substrate-binding positions include Thr-159, 175–176, Gly-204, 384–388, and 589–593; these read SC, NLCSE, and PTGSI. Cys-176 and Cys-413 are oxidised to a cystine. The Proton acceptor role is filled by Asn-384. Catalysis depends on Cys-386, which acts as the Cysteine radical intermediate. The Proton acceptor role is filled by Glu-388.

Belongs to the ribonucleoside diphosphate reductase large chain family. As to quaternary structure, tetramer of two alpha and two beta subunits.

It catalyses the reaction a 2'-deoxyribonucleoside 5'-diphosphate + [thioredoxin]-disulfide + H2O = a ribonucleoside 5'-diphosphate + [thioredoxin]-dithiol. Under complex allosteric control mediated by deoxynucleoside triphosphates and ATP binding. The type of nucleotide bound at the specificity site determines substrate preference. It seems probable that ATP makes the enzyme reduce CDP and UDP, dGTP favors ADP reduction and dTTP favors GDP reduction. Provides the precursors necessary for DNA synthesis. Catalyzes the biosynthesis of deoxyribonucleotides from the corresponding ribonucleotides. The sequence is that of Ribonucleoside-diphosphate reductase subunit alpha (nrdE) from Mycoplasma genitalium (strain ATCC 33530 / DSM 19775 / NCTC 10195 / G37) (Mycoplasmoides genitalium).